The sequence spans 407 residues: Vancomycin aglycone glucosyltransferase (407 aa).

Belongs to the glycosyltransferase 28 family.

It carries out the reaction vancomycin aglycone + UDP-alpha-D-glucose = devancoaminyl-vancomycin + UDP. It functions in the pathway antibiotic biosynthesis; vancomycin biosynthesis. Glucosyltransferase that transfers glucose to the 4-OH-Phegly(4) residue of vancomycin aglycone (AGV) to produce devancoaminyl-vancomycin (DVV) in the biosynthesis of glycopeptide antibiotic chloroeremomycin, a member of the vancomycin group of antibiotics. The chain is Vancomycin aglycone glucosyltransferase (gtfB) from Amycolatopsis orientalis (Nocardia orientalis).